The primary structure comprises 312 residues: MNAGILGVGKYVPERILTNFDLEKMMETSDEWIRTRTGIEERRIARDDEYTHDLAYEAAKVAIENAGLTPNDIDLFIVATVTQEATFPSVANIIQDRLGAKNAAGMDVEAACAGFTFGVVTAAQFIKTGAYKNIVVVGADKLSKITNWDDRATAVLFGDGAGAIVMGPVSDDHGLLSFDLGSDGSGGKYLNLDENKKIYMNGREVFRFAVRQMGEASLRVLERAGLEKEDLDLLIPHQANIRIMEASRERLNLPEEKLMKTVHKYGNTSSSSIALALVDAVEEGRIKDNDNVLLVGFGGGLTWGALIIRWGK.

Catalysis depends on residues Cys-112 and His-237. Residues 238–242 (QANIR) are ACP-binding. The active site involves Asn-267.

The protein belongs to the thiolase-like superfamily. FabH family. In terms of assembly, homodimer.

It is found in the cytoplasm. It carries out the reaction malonyl-[ACP] + acetyl-CoA + H(+) = 3-oxobutanoyl-[ACP] + CO2 + CoA. It functions in the pathway lipid metabolism; fatty acid biosynthesis. In terms of biological role, catalyzes the condensation reaction of fatty acid synthesis by the addition to an acyl acceptor of two carbons from malonyl-ACP. Catalyzes the first condensation reaction which initiates fatty acid synthesis and may therefore play a role in governing the total rate of fatty acid production. Possesses both acetoacetyl-ACP synthase and acetyl transacylase activities. Its substrate specificity determines the biosynthesis of branched-chain and/or straight-chain of fatty acids. In Listeria welshimeri serovar 6b (strain ATCC 35897 / DSM 20650 / CCUG 15529 / CIP 8149 / NCTC 11857 / SLCC 5334 / V8), this protein is Beta-ketoacyl-[acyl-carrier-protein] synthase III.